The following is a 997-amino-acid chain: Phosphoenolpyruvate carboxylase (997 aa).

The tract at residues 1 to 67 (MKSSGSARTA…KPAARTREDK (67 aa)) is disordered. Residues His207 and Lys649 contribute to the active site.

Belongs to the PEPCase type 1 family. The cofactor is Mg(2+).

It catalyses the reaction oxaloacetate + phosphate = phosphoenolpyruvate + hydrogencarbonate. Functionally, forms oxaloacetate, a four-carbon dicarboxylic acid source for the tricarboxylic acid cycle. The polypeptide is Phosphoenolpyruvate carboxylase (Burkholderia vietnamiensis (strain G4 / LMG 22486) (Burkholderia cepacia (strain R1808))).